A 182-amino-acid polypeptide reads, in one-letter code: CASP-like protein 5A1 (182 aa).

Residues 1–47 lie on the Cytoplasmic side of the membrane; the sequence is MEMASHPAVHPVALPPPYQAVGPPAPPAVRINDFPGSPGTLMGLALR. A helical transmembrane segment spans residues 48 to 68; that stretch reads FAQLGFALTALCIMVSIVGFS. Topologically, residues 69–72 are extracellular; sequence SVTA. A helical transmembrane segment spans residues 73–93; the sequence is FCFLVAAMVLQCIWSLCLGVL. The Cytoplasmic portion of the chain corresponds to 94–117; that stretch reads DCYALLTKRSLRNSLILSFFVVGD. A helical transmembrane segment spans residues 118–138; the sequence is WITSTMTFAGACAAAGITVLI. The Extracellular segment spans residues 139 to 158; sequence DNDLNQCGPNHCNRFEAAAA. The helical transmembrane segment at 159–179 threads the bilayer; it reads MAFMSWVITTISFFLSFWILV. Over 180–182 the chain is Cytoplasmic; it reads TCR.

Belongs to the Casparian strip membrane proteins (CASP) family. As to quaternary structure, homodimer and heterodimers.

It localises to the cell membrane. This Physcomitrium patens (Spreading-leaved earth moss) protein is CASP-like protein 5A1.